The primary structure comprises 310 residues: Putative carbonic anhydrase 5 (310 aa).

The N-terminal stretch at 1-20 (MPSHLLVLSLLVALLVVVSC) is a signal peptide. Positions 26-280 (HGWGYDENNG…LNGRRIQYRP (255 aa)) constitute an Alpha-carbonic anhydrase domain. Zn(2+) contacts are provided by histidine 117, histidine 119, and histidine 142. A substrate-binding site is contributed by 223–224 (TT).

It belongs to the alpha-carbonic anhydrase family.

It localises to the secreted. The enzyme catalyses hydrogencarbonate + H(+) = CO2 + H2O. Reversible hydration of carbon dioxide. This is Putative carbonic anhydrase 5 (cah-5) from Caenorhabditis elegans.